Consider the following 553-residue polypeptide: Heterochromatin protein 1-binding protein 3 (553 aa).

Residue Ala-2 is modified to N-acetylalanine. Ser-6 bears the Phosphoserine mark. 2 disordered regions span residues 29-134 (KLGE…KTIP) and 140-159 (SASQLARAQKQTPMASSPRP). Thr-51 carries the post-translational modification Phosphothreonine. Acidic residues predominate over residues 60 to 71 (GEEEKPEPDISS). A Glycyl lysine isopeptide (Lys-Gly) (interchain with G-Cter in SUMO2) cross-link involves residue Lys-64. The residue at position 85 (Thr-85) is a Phosphothreonine. The span at 94 to 127 (EQPKGEPENEEKEENKSSEETKKDEKDQSKEKEK) shows a compositional bias: basic and acidic residues. Lys-97 is covalently cross-linked (Glycyl lysine isopeptide (Lys-Gly) (interchain with G-Cter in SUMO2)). A compositionally biased stretch (polar residues) spans 140 to 154 (SASQLARAQKQTPMA). 3 positions are modified to phosphoserine: Ser-142, Ser-155, and Ser-156. Positions 157 to 232 (PRPKMDAILT…GASGSFVVVQ (76 aa)) constitute an H15 1 domain. At Lys-190 the chain carries N6-acetyllysine. A disordered region spans residues 230–255 (VVQKSRKTPQKSRNRKNRSSAVDPEP). Positions 233-247 (KSRKTPQKSRNRKNR) are enriched in basic residues. Residues Ser-248 and Ser-249 each carry the phosphoserine modification. The PxVxL motif motif lies at 255–259 (PQVKL). 2 H15 domains span residues 255–330 (PQVK…QLKK) and 337–413 (LGGS…QLCF). Residue Lys-258 forms a Glycyl lysine isopeptide (Lys-Gly) (interchain with G-Cter in SUMO2) linkage. The tract at residues 422 to 553 (LFPKKEPDDS…TMKKSFRVKK (132 aa)) is disordered. Over residues 430–450 (DSRDEDEDEDESSEEDSEDEE) the composition is skewed to acidic residues. Residues Ser-441, Ser-442, and Ser-446 each carry the phosphoserine modification. Basic residues predominate over residues 489–510 (GKARPLPKKAPPKAKTPAKKTR). Over residues 517-527 (KKPSGGSSKKP) the composition is skewed to low complexity. Residues 543–553 (STMKKSFRVKK) are compositionally biased toward basic residues.

Interacts (via PxVxL motif) with CBX5 (via Trp-174).

The protein resides in the nucleus. Its subcellular location is the chromosome. Its function is as follows. Component of heterochromatin that maintains heterochromatin integrity during G1/S progression and regulates the duration of G1 phase to critically influence cell proliferative capacity. Mediates chromatin condensation during hypoxia, leading to increased tumor cell viability, radio-resistance, chemo-resistance and self-renewal. The sequence is that of Heterochromatin protein 1-binding protein 3 (HP1BP3) from Homo sapiens (Human).